The chain runs to 935 residues: ABC transporter A family member 7 (935 aa).

7 helical membrane-spanning segments follow: residues 34–54 (LIMI…LFDT), 338–358 (IASL…FPVI), 392–412 (FLTI…AIGL), 424–444 (FVFY…VSSV), 454–474 (ASYI…NFLI), 483–503 (WIIV…YELA), and 528–548 (DDVF…AYYI). Residues 571-591 (SLRRPSLQRQGSKVSVDMEKP) form a disordered region. The region spanning 613-850 (IVCDNLKKVY…YGGSYVFTMT (238 aa)) is the ABC transporter domain. Position 651-658 (651-658 (GPNGAGKT)) interacts with ATP.

This sequence belongs to the ABC transporter superfamily. ABCA family. CPR flippase (TC 3.A.1.211) subfamily.

It is found in the membrane. This chain is ABC transporter A family member 7 (ABCA7), found in Arabidopsis thaliana (Mouse-ear cress).